Consider the following 94-residue polypeptide: Large ribosomal subunit protein uL23 (94 aa).

Belongs to the universal ribosomal protein uL23 family. Part of the 50S ribosomal subunit. Contacts protein L29, and trigger factor when it is bound to the ribosome.

One of the early assembly proteins it binds 23S rRNA. One of the proteins that surrounds the polypeptide exit tunnel on the outside of the ribosome. Forms the main docking site for trigger factor binding to the ribosome. The sequence is that of Large ribosomal subunit protein uL23 from Lysinibacillus sphaericus (strain C3-41).